A 186-amino-acid polypeptide reads, in one-letter code: Imidazoleglycerol-phosphate dehydratase (186 aa).

This sequence belongs to the imidazoleglycerol-phosphate dehydratase family.

It is found in the cytoplasm. The catalysed reaction is D-erythro-1-(imidazol-4-yl)glycerol 3-phosphate = 3-(imidazol-4-yl)-2-oxopropyl phosphate + H2O. It functions in the pathway amino-acid biosynthesis; L-histidine biosynthesis; L-histidine from 5-phospho-alpha-D-ribose 1-diphosphate: step 6/9. The sequence is that of Imidazoleglycerol-phosphate dehydratase from Pyrobaculum aerophilum (strain ATCC 51768 / DSM 7523 / JCM 9630 / CIP 104966 / NBRC 100827 / IM2).